The sequence spans 98 residues: NADH-ubiquinone oxidoreductase chain 4L (98 aa).

Helical transmembrane passes span 1–21 (MSLV…GLLM), 29–49 (SLLC…LMIL), and 61–81 (IILL…LVMV).

Belongs to the complex I subunit 4L family. As to quaternary structure, core subunit of respiratory chain NADH dehydrogenase (Complex I) which is composed of 45 different subunits.

It is found in the mitochondrion inner membrane. The catalysed reaction is a ubiquinone + NADH + 5 H(+)(in) = a ubiquinol + NAD(+) + 4 H(+)(out). Functionally, core subunit of the mitochondrial membrane respiratory chain NADH dehydrogenase (Complex I) which catalyzes electron transfer from NADH through the respiratory chain, using ubiquinone as an electron acceptor. Part of the enzyme membrane arm which is embedded in the lipid bilayer and involved in proton translocation. The chain is NADH-ubiquinone oxidoreductase chain 4L (MT-ND4L) from Capra hircus (Goat).